Reading from the N-terminus, the 559-residue chain is Urocanate hydratase (559 aa).

NAD(+) is bound by residues Gly-50–Gly-51, Gln-128, Gly-174–Gly-176, Asp-194, Arg-199, Asn-240–Ala-241, Gln-261–His-265, Tyr-271–Ile-272, and Tyr-320. Cys-408 is a catalytic residue. NAD(+) is bound at residue Gly-490.

The protein belongs to the urocanase family. It depends on NAD(+) as a cofactor.

The protein localises to the cytoplasm. The enzyme catalyses 4-imidazolone-5-propanoate = trans-urocanate + H2O. The protein operates within amino-acid degradation; L-histidine degradation into L-glutamate; N-formimidoyl-L-glutamate from L-histidine: step 2/3. Catalyzes the conversion of urocanate to 4-imidazolone-5-propionate. This chain is Urocanate hydratase, found in Halalkalibacterium halodurans (strain ATCC BAA-125 / DSM 18197 / FERM 7344 / JCM 9153 / C-125) (Bacillus halodurans).